The following is a 323-amino-acid chain: Lipoyl synthase (323 aa).

Positions 61, 66, 72, 87, 91, 94, and 300 each coordinate [4Fe-4S] cluster. The Radical SAM core domain occupies 73 to 289 (WDKKHATFMI…ETVAYSKGFL (217 aa)).

Belongs to the radical SAM superfamily. Lipoyl synthase family. The cofactor is [4Fe-4S] cluster.

The protein resides in the cytoplasm. It catalyses the reaction [[Fe-S] cluster scaffold protein carrying a second [4Fe-4S](2+) cluster] + N(6)-octanoyl-L-lysyl-[protein] + 2 oxidized [2Fe-2S]-[ferredoxin] + 2 S-adenosyl-L-methionine + 4 H(+) = [[Fe-S] cluster scaffold protein] + N(6)-[(R)-dihydrolipoyl]-L-lysyl-[protein] + 4 Fe(3+) + 2 hydrogen sulfide + 2 5'-deoxyadenosine + 2 L-methionine + 2 reduced [2Fe-2S]-[ferredoxin]. The protein operates within protein modification; protein lipoylation via endogenous pathway; protein N(6)-(lipoyl)lysine from octanoyl-[acyl-carrier-protein]: step 2/2. Functionally, catalyzes the radical-mediated insertion of two sulfur atoms into the C-6 and C-8 positions of the octanoyl moiety bound to the lipoyl domains of lipoate-dependent enzymes, thereby converting the octanoylated domains into lipoylated derivatives. This Rhizobium etli (strain ATCC 51251 / DSM 11541 / JCM 21823 / NBRC 15573 / CFN 42) protein is Lipoyl synthase.